A 124-amino-acid chain; its full sequence is Small ribosomal subunit protein uS12 (124 aa).

Aspartate 89 is subject to 3-methylthioaspartic acid. The disordered stretch occupies residues 104-124; the sequence is SAGVQNRNRGRSKYGTKRPKK. Residues 111 to 124 show a composition bias toward basic residues; that stretch reads NRGRSKYGTKRPKK.

The protein belongs to the universal ribosomal protein uS12 family. In terms of assembly, part of the 30S ribosomal subunit. Contacts proteins S8 and S17. May interact with IF1 in the 30S initiation complex.

Its function is as follows. With S4 and S5 plays an important role in translational accuracy. Interacts with and stabilizes bases of the 16S rRNA that are involved in tRNA selection in the A site and with the mRNA backbone. Located at the interface of the 30S and 50S subunits, it traverses the body of the 30S subunit contacting proteins on the other side and probably holding the rRNA structure together. The combined cluster of proteins S8, S12 and S17 appears to hold together the shoulder and platform of the 30S subunit. In Desulforamulus reducens (strain ATCC BAA-1160 / DSM 100696 / MI-1) (Desulfotomaculum reducens), this protein is Small ribosomal subunit protein uS12.